A 506-amino-acid polypeptide reads, in one-letter code: Lysine--tRNA ligase (506 aa).

The Mg(2+) site is built by E416 and E423.

This sequence belongs to the class-II aminoacyl-tRNA synthetase family. In terms of assembly, homodimer. Mg(2+) is required as a cofactor.

It is found in the cytoplasm. It catalyses the reaction tRNA(Lys) + L-lysine + ATP = L-lysyl-tRNA(Lys) + AMP + diphosphate. The chain is Lysine--tRNA ligase from Sodalis glossinidius (strain morsitans).